Here is an 84-residue protein sequence, read N- to C-terminus: Cell division topological specificity factor (84 aa).

This sequence belongs to the MinE family.

In terms of biological role, prevents the cell division inhibition by proteins MinC and MinD at internal division sites while permitting inhibition at polar sites. This ensures cell division at the proper site by restricting the formation of a division septum at the midpoint of the long axis of the cell. In Ralstonia pickettii (strain 12J), this protein is Cell division topological specificity factor.